A 133-amino-acid polypeptide reads, in one-letter code: Large-conductance mechanosensitive channel (133 aa).

2 consecutive transmembrane segments (helical) span residues 17-37 (AFILKGNVVELAVAVIIGGAF) and 73-93 (IGSFAGSVIDFLIIAFVLYLA).

The protein belongs to the MscL family. In terms of assembly, homopentamer.

The protein resides in the cell inner membrane. Functionally, channel that opens in response to stretch forces in the membrane lipid bilayer. May participate in the regulation of osmotic pressure changes within the cell. The polypeptide is Large-conductance mechanosensitive channel (Synechococcus elongatus (strain ATCC 33912 / PCC 7942 / FACHB-805) (Anacystis nidulans R2)).